A 508-amino-acid chain; its full sequence is Glycerol kinase (508 aa).

Residue T14 coordinates ADP. 3 residues coordinate ATP: T14, T15, and S16. T14 contributes to the sn-glycerol 3-phosphate binding site. An ADP-binding site is contributed by R18. Positions 84, 85, and 136 each coordinate sn-glycerol 3-phosphate. R84, E85, and Y136 together coordinate glycerol. Residue H232 is modified to Phosphohistidine; by HPr. D246 is a sn-glycerol 3-phosphate binding site. D246 and Q247 together coordinate glycerol. Residues T268 and G311 each contribute to the ADP site. T268, G311, Q315, and G412 together coordinate ATP. Residues G412 and N416 each contribute to the ADP site.

This sequence belongs to the FGGY kinase family. Homotetramer and homodimer (in equilibrium). The phosphoenolpyruvate-dependent sugar phosphotransferase system (PTS), including enzyme I, and histidine-containing protein (HPr) are required for the phosphorylation, which leads to the activation of the enzyme.

It carries out the reaction glycerol + ATP = sn-glycerol 3-phosphate + ADP + H(+). Its pathway is polyol metabolism; glycerol degradation via glycerol kinase pathway; sn-glycerol 3-phosphate from glycerol: step 1/1. With respect to regulation, activated by phosphorylation and inhibited by fructose 1,6-bisphosphate (FBP). Its function is as follows. Key enzyme in the regulation of glycerol uptake and metabolism. Catalyzes the phosphorylation of glycerol to yield sn-glycerol 3-phosphate. This Streptococcus pyogenes serotype M12 (strain MGAS2096) protein is Glycerol kinase.